Consider the following 654-residue polypeptide: Cytochrome B pre-mRNA-processing protein 1 (654 aa).

Its subcellular location is the mitochondrion. Responsible for conferring a stable 5'-end on cytochrome b mRNA. In Saccharomyces cerevisiae (strain ATCC 204508 / S288c) (Baker's yeast), this protein is Cytochrome B pre-mRNA-processing protein 1 (CBP1).